Here is a 1435-residue protein sequence, read N- to C-terminus: Gag-Pol polyprotein (1435 aa).

Residue Gly2 is the site of N-myristoyl glycine; by host attachment. The tract at residues 7-31 (VLSGGELDRWEKIRLRPGGKKKYKL) is interaction with Gp41. The segment at 8-43 (LSGGELDRWEKIRLRPGGKKKYKLKHIVWASRELER) is interaction with host CALM1. The interaction with host AP3D1 stretch occupies residues 12 to 19 (ELDRWEKI). The tract at residues 14 to 33 (DRWEKIRLRPGGKKKYKLKH) is interaction with membrane phosphatidylinositol 4,5-bisphosphate and RNA. A Nuclear export signal motif is present at residues 16–22 (WEKIRLR). The Nuclear localization signal motif lies at 26–32 (KKKYKLK). The interaction with membrane phosphatidylinositol 4,5-bisphosphate stretch occupies residues 73 to 77 (EELKS). A disordered region spans residues 106–127 (EEQNKSKKKAQQAAADTGNSSQ). A Phosphotyrosine; by host modification is found at Tyr132. Residues 189–227 (NTVGGHQAAMQMLKETINEEAAEWDRLHPVQAGPVAPGQ) are interaction with human PPIA/CYPA and NUP153. Residues 277–363 (YSPSSILDIK…GGPGHKARVL (87 aa)) are dimerization/Multimerization of capsid protein p24. CCHC-type zinc fingers lie at residues 390-407 (VKCF…NCRA) and 411-428 (KGCW…DCTE). Positions 489 to 493 (PQITL) are dimerization of protease. Residues 508 to 577 (KEALLDTGAD…TPVNIIGRNL (70 aa)) form the Peptidase A2 domain. Asp513 (for protease activity; shared with dimeric partner) is an active-site residue. 2 dimerization of protease regions span residues 537–543 (GIGGFIK) and 576–588 (NLLT…LNFP). The 191-residue stretch at 631–821 (EGKISKIGPE…PPFLWMGYEL (191 aa)) folds into the Reverse transcriptase domain. The Mg(2+) site is built by Asp697, Asp772, and Asp773. The RT 'primer grip' stretch occupies residues 814–822 (FLWMGYELH). A Tryptophan repeat motif motif is present at residues 985–1001 (WEAWWTDYWQATWIPEW). In terms of domain architecture, RNase H type-1 spans 1021 to 1144 (IVGAETFYVD…VDKLVSAGIR (124 aa)). Residues Asp1030, Glu1065, Asp1085, and Asp1136 each coordinate Mg(2+). The Integrase-type zinc-finger motif lies at 1150 to 1191 (DGIDKAQEEHEKYHTNWRAMASDFNLPPVVAKEIVASCNKCQ). Zn(2+) contacts are provided by His1159, His1163, Cys1187, and Cys1190. An Integrase catalytic domain is found at 1201–1351 (VDCSPGIWQL…SAGERIVDII (151 aa)). Residues Asp1211, Asp1263, and Glu1299 each coordinate Mg(2+). A DNA-binding region (integrase-type) is located at residues 1370–1417 (FRVYYRDSRDPLWKGPAKLLWKGEGAVVIQDNSDIKVVPRRKAKIIRD).

Homotrimer; further assembles as hexamers of trimers. Interacts with gp41 (via C-terminus). Interacts with host CALM1; this interaction induces a conformational change in the Matrix protein, triggering exposure of the myristate group. Interacts with host AP3D1; this interaction allows the polyprotein trafficking to multivesicular bodies during virus assembly. Part of the pre-integration complex (PIC) which is composed of viral genome, matrix protein, Vpr and integrase. As to quaternary structure, homodimer; the homodimer further multimerizes as homohexamers or homopentamers. Interacts with human PPIA/CYPA; This interaction stabilizes the capsid. Interacts with human NUP153. Interacts with host PDZD8; this interaction stabilizes the capsid. Interacts with monkey TRIM5; this interaction destabilizes the capsid. In terms of assembly, homodimer, whose active site consists of two apposed aspartic acid residues. Heterodimer of p66 RT and p51 RT (RT p66/p51). Heterodimerization of RT is essential for DNA polymerase activity. The overall folding of the subdomains is similar in p66 RT and p51 RT but the spatial arrangements of the subdomains are dramatically different. As to quaternary structure, homotetramer; may further associate as a homohexadecamer. Part of the pre-integration complex (PIC) which is composed of viral genome, matrix protein, Vpr and integrase. Interacts with human SMARCB1/INI1 and human PSIP1/LEDGF isoform 1. Interacts with human KPNA3; this interaction might play a role in nuclear import of the pre-integration complex. Interacts with human NUP153; this interaction might play a role in nuclear import of the pre-integration complex. Requires Mg(2+) as cofactor. In terms of processing, specific enzymatic cleavages by the viral protease yield mature proteins. The protease is released by autocatalytic cleavage. The polyprotein is cleaved during and after budding, this process is termed maturation. Proteolytic cleavage of p66 RT removes the RNase H domain to yield the p51 RT subunit. Nucleocapsid protein p7 might be further cleaved after virus entry. Tyrosine phosphorylated presumably in the virion by a host kinase. Phosphorylation is apparently not a major regulator of membrane association. Post-translationally, phosphorylated possibly by host MAPK1; this phosphorylation is necessary for Pin1-mediated virion uncoating. In terms of processing, methylated by host PRMT6, impairing its function by reducing RNA annealing and the initiation of reverse transcription.

The protein resides in the host cell membrane. It is found in the host endosome. Its subcellular location is the host multivesicular body. It localises to the virion membrane. The protein localises to the host nucleus. The protein resides in the host cytoplasm. It is found in the virion. The catalysed reaction is Specific for a P1 residue that is hydrophobic, and P1' variable, but often Pro.. The enzyme catalyses Endohydrolysis of RNA in RNA/DNA hybrids. Three different cleavage modes: 1. sequence-specific internal cleavage of RNA. Human immunodeficiency virus type 1 and Moloney murine leukemia virus enzymes prefer to cleave the RNA strand one nucleotide away from the RNA-DNA junction. 2. RNA 5'-end directed cleavage 13-19 nucleotides from the RNA end. 3. DNA 3'-end directed cleavage 15-20 nucleotides away from the primer terminus.. It catalyses the reaction 3'-end directed exonucleolytic cleavage of viral RNA-DNA hybrid.. It carries out the reaction DNA(n) + a 2'-deoxyribonucleoside 5'-triphosphate = DNA(n+1) + diphosphate. Its activity is regulated as follows. Protease: The viral protease is inhibited by many synthetic protease inhibitors (PIs), such as amprenavir, atazanavir, indinavir, loprinavir, nelfinavir, ritonavir and saquinavir. Use of protease inhibitors in tritherapy regimens permit more ambitious therapeutic strategies. Reverse transcriptase/ribonuclease H: RT can be inhibited either by nucleoside RT inhibitors (NRTIs) or by non nucleoside RT inhibitors (NNRTIs). NRTIs act as chain terminators, whereas NNRTIs inhibit DNA polymerization by binding a small hydrophobic pocket near the RT active site and inducing an allosteric change in this region. Classical NRTIs are abacavir, adefovir (PMEA), didanosine (ddI), lamivudine (3TC), stavudine (d4T), tenofovir (PMPA), zalcitabine (ddC), and zidovudine (AZT). Classical NNRTIs are atevirdine (BHAP U-87201E), delavirdine, efavirenz (DMP-266), emivirine (I-EBU), and nevirapine (BI-RG-587). The tritherapies used as a basic effective treatment of AIDS associate two NRTIs and one NNRTI. Functionally, mediates, with Gag polyprotein, the essential events in virion assembly, including binding the plasma membrane, making the protein-protein interactions necessary to create spherical particles, recruiting the viral Env proteins, and packaging the genomic RNA via direct interactions with the RNA packaging sequence (Psi). Gag-Pol polyprotein may regulate its own translation, by the binding genomic RNA in the 5'-UTR. At low concentration, the polyprotein would promote translation, whereas at high concentration, the polyprotein would encapsidate genomic RNA and then shut off translation. Its function is as follows. Targets the polyprotein to the plasma membrane via a multipartite membrane-binding signal, that includes its myristoylated N-terminus. Matrix protein is part of the pre-integration complex. Implicated in the release from host cell mediated by Vpu. Binds to RNA. Forms the conical core that encapsulates the genomic RNA-nucleocapsid complex in the virion. Most core are conical, with only 7% tubular. The core is constituted by capsid protein hexamer subunits. The core is disassembled soon after virion entry. Host restriction factors such as TRIM5-alpha or TRIMCyp bind retroviral capsids and cause premature capsid disassembly, leading to blocks in reverse transcription. Capsid restriction by TRIM5 is one of the factors which restricts HIV-1 to the human species. Host PIN1 apparently facilitates the virion uncoating. On the other hand, interactions with PDZD8 or CYPA stabilize the capsid. In terms of biological role, encapsulates and protects viral dimeric unspliced genomic RNA (gRNA). Binds these RNAs through its zinc fingers. Acts as a nucleic acid chaperone which is involved in rearangement of nucleic acid secondary structure during gRNA retrotranscription. Also facilitates template switch leading to recombination. As part of the polyprotein, participates in gRNA dimerization, packaging, tRNA incorporation and virion assembly. Functionally, aspartyl protease that mediates proteolytic cleavages of Gag and Gag-Pol polyproteins during or shortly after the release of the virion from the plasma membrane. Cleavages take place as an ordered, step-wise cascade to yield mature proteins. This process is called maturation. Displays maximal activity during the budding process just prior to particle release from the cell. Also cleaves Nef and Vif, probably concomitantly with viral structural proteins on maturation of virus particles. Hydrolyzes host EIF4GI and PABP1 in order to shut off the capped cellular mRNA translation. The resulting inhibition of cellular protein synthesis serves to ensure maximal viral gene expression and to evade host immune response. Also mediates cleavage of host YTHDF3. Mediates cleavage of host CARD8, thereby activating the CARD8 inflammasome, leading to the clearance of latent HIV-1 in patient CD4(+) T-cells after viral reactivation; in contrast, HIV-1 can evade CARD8-sensing when its protease remains inactive in infected cells prior to viral budding. Its function is as follows. Multifunctional enzyme that converts the viral RNA genome into dsDNA in the cytoplasm, shortly after virus entry into the cell. This enzyme displays a DNA polymerase activity that can copy either DNA or RNA templates, and a ribonuclease H (RNase H) activity that cleaves the RNA strand of RNA-DNA heteroduplexes in a partially processive 3' to 5' endonucleasic mode. Conversion of viral genomic RNA into dsDNA requires many steps. A tRNA(3)-Lys binds to the primer-binding site (PBS) situated at the 5'-end of the viral RNA. RT uses the 3' end of the tRNA primer to perform a short round of RNA-dependent minus-strand DNA synthesis. The reading proceeds through the U5 region and ends after the repeated (R) region which is present at both ends of viral RNA. The portion of the RNA-DNA heteroduplex is digested by the RNase H, resulting in a ssDNA product attached to the tRNA primer. This ssDNA/tRNA hybridizes with the identical R region situated at the 3' end of viral RNA. This template exchange, known as minus-strand DNA strong stop transfer, can be either intra- or intermolecular. RT uses the 3' end of this newly synthesized short ssDNA to perform the RNA-dependent minus-strand DNA synthesis of the whole template. RNase H digests the RNA template except for two polypurine tracts (PPTs) situated at the 5'-end and near the center of the genome. It is not clear if both polymerase and RNase H activities are simultaneous. RNase H probably can proceed both in a polymerase-dependent (RNA cut into small fragments by the same RT performing DNA synthesis) and a polymerase-independent mode (cleavage of remaining RNA fragments by free RTs). Secondly, RT performs DNA-directed plus-strand DNA synthesis using the PPTs that have not been removed by RNase H as primers. PPTs and tRNA primers are then removed by RNase H. The 3' and 5' ssDNA PBS regions hybridize to form a circular dsDNA intermediate. Strand displacement synthesis by RT to the PBS and PPT ends produces a blunt ended, linear dsDNA copy of the viral genome that includes long terminal repeats (LTRs) at both ends. Catalyzes viral DNA integration into the host chromosome, by performing a series of DNA cutting and joining reactions. This enzyme activity takes place after virion entry into a cell and reverse transcription of the RNA genome in dsDNA. The first step in the integration process is 3' processing. This step requires a complex comprising the viral genome, matrix protein, Vpr and integrase. This complex is called the pre-integration complex (PIC). The integrase protein removes 2 nucleotides from each 3' end of the viral DNA, leaving recessed CA OH's at the 3' ends. In the second step, the PIC enters cell nucleus. This process is mediated through integrase and Vpr proteins, and allows the virus to infect a non dividing cell. This ability to enter the nucleus is specific of lentiviruses, other retroviruses cannot and rely on cell division to access cell chromosomes. In the third step, termed strand transfer, the integrase protein joins the previously processed 3' ends to the 5' ends of strands of target cellular DNA at the site of integration. The 5'-ends are produced by integrase-catalyzed staggered cuts, 5 bp apart. A Y-shaped, gapped, recombination intermediate results, with the 5'-ends of the viral DNA strands and the 3' ends of target DNA strands remaining unjoined, flanking a gap of 5 bp. The last step is viral DNA integration into host chromosome. This involves host DNA repair synthesis in which the 5 bp gaps between the unjoined strands are filled in and then ligated. Since this process occurs at both cuts flanking the HIV genome, a 5 bp duplication of host DNA is produced at the ends of HIV-1 integration. Alternatively, Integrase may catalyze the excision of viral DNA just after strand transfer, this is termed disintegration. The polypeptide is Gag-Pol polyprotein (gag-pol) (Human immunodeficiency virus type 1 group M subtype B (strain 89.6) (HIV-1)).